A 98-amino-acid polypeptide reads, in one-letter code: Large ribosomal subunit protein bL21 (98 aa).

This sequence belongs to the bacterial ribosomal protein bL21 family. In terms of assembly, part of the 50S ribosomal subunit. Contacts protein L20.

Its function is as follows. This protein binds to 23S rRNA in the presence of protein L20. The polypeptide is Large ribosomal subunit protein bL21 (Novosphingobium aromaticivorans (strain ATCC 700278 / DSM 12444 / CCUG 56034 / CIP 105152 / NBRC 16084 / F199)).